A 188-amino-acid polypeptide reads, in one-letter code: Elongation factor P (188 aa).

Lysine 34 carries the N6-(3,6-diaminohexanoyl)-5-hydroxylysine modification.

This sequence belongs to the elongation factor P family. Post-translationally, may be beta-lysylated on the epsilon-amino group of Lys-34 by the combined action of EpmA and EpmB, and then hydroxylated on the C5 position of the same residue by EpmC (if this protein is present). Lysylation is critical for the stimulatory effect of EF-P on peptide-bond formation. The lysylation moiety may extend toward the peptidyltransferase center and stabilize the terminal 3-CCA end of the tRNA. Hydroxylation of the C5 position on Lys-34 may allow additional potential stabilizing hydrogen-bond interactions with the P-tRNA.

Its subcellular location is the cytoplasm. The protein operates within protein biosynthesis; polypeptide chain elongation. Its function is as follows. Involved in peptide bond synthesis. Alleviates ribosome stalling that occurs when 3 or more consecutive Pro residues or the sequence PPG is present in a protein, possibly by augmenting the peptidyl transferase activity of the ribosome. Modification of Lys-34 is required for alleviation. This is Elongation factor P from Actinobacillus pleuropneumoniae serotype 5b (strain L20).